The following is a 249-amino-acid chain: Segregation and condensation protein A (249 aa).

This sequence belongs to the ScpA family. Component of a cohesin-like complex composed of ScpA, ScpB and the Smc homodimer, in which ScpA and ScpB bind to the head domain of Smc. The presence of the three proteins is required for the association of the complex with DNA.

It is found in the cytoplasm. In terms of biological role, participates in chromosomal partition during cell division. May act via the formation of a condensin-like complex containing Smc and ScpB that pull DNA away from mid-cell into both cell halves. In Listeria monocytogenes serotype 4a (strain HCC23), this protein is Segregation and condensation protein A.